Consider the following 218-residue polypeptide: Protein-L-isoaspartate O-methyltransferase (218 aa).

Ser60 is a catalytic residue.

Belongs to the methyltransferase superfamily. L-isoaspartyl/D-aspartyl protein methyltransferase family.

It is found in the cytoplasm. It carries out the reaction [protein]-L-isoaspartate + S-adenosyl-L-methionine = [protein]-L-isoaspartate alpha-methyl ester + S-adenosyl-L-homocysteine. In terms of biological role, catalyzes the methyl esterification of L-isoaspartyl residues in peptides and proteins that result from spontaneous decomposition of normal L-aspartyl and L-asparaginyl residues. It plays a role in the repair and/or degradation of damaged proteins. The polypeptide is Protein-L-isoaspartate O-methyltransferase (Roseiflexus castenholzii (strain DSM 13941 / HLO8)).